Consider the following 193-residue polypeptide: Large ribosomal subunit protein uL5 (193 aa).

This sequence belongs to the universal ribosomal protein uL5 family. In terms of assembly, part of the 50S ribosomal subunit; part of the 5S rRNA/L5/L18/L25 subcomplex. Contacts the 5S rRNA and the P site tRNA. Forms a bridge to the 30S subunit in the 70S ribosome.

Its function is as follows. This is one of the proteins that bind and probably mediate the attachment of the 5S RNA into the large ribosomal subunit, where it forms part of the central protuberance. In the 70S ribosome it contacts protein S13 of the 30S subunit (bridge B1b), connecting the 2 subunits; this bridge is implicated in subunit movement. Contacts the P site tRNA; the 5S rRNA and some of its associated proteins might help stabilize positioning of ribosome-bound tRNAs. In Arthrobacter sp. (strain FB24), this protein is Large ribosomal subunit protein uL5.